Consider the following 297-residue polypeptide: MVEVRVPATSANIGSGFDCLGVAVNMYNKFFVEEIEEGLIFEGCADKFKNEDNLIYVAMKKCFDKIGYKPTGLRIKIESDIPVSRGLGSSAACVVGGIVSANELAGGVLNKKELLDLAVEVEGHPDNVNPAFCGGMTASISDNREVIYSKVKVSEGIKFCALIPDFTLSTEKARAVLPKSIDYKDGIFNVGRTALMISALNNGDFHLIKYACKDKLHQDYRAKLIENFYSIKEECEKLNSLGVFLSGAGPTIMVMLREEDKDFSKNIKSFLETLKNKWEVRELKIDKLGTVVNNRKV.

ATP is bound at residue 82 to 92; that stretch reads PVSRGLGSSAA.

The protein belongs to the GHMP kinase family. Homoserine kinase subfamily.

It is found in the cytoplasm. The enzyme catalyses L-homoserine + ATP = O-phospho-L-homoserine + ADP + H(+). Its pathway is amino-acid biosynthesis; L-threonine biosynthesis; L-threonine from L-aspartate: step 4/5. Functionally, catalyzes the ATP-dependent phosphorylation of L-homoserine to L-homoserine phosphate. The sequence is that of Homoserine kinase from Clostridium botulinum (strain 657 / Type Ba4).